We begin with the raw amino-acid sequence, 202 residues long: Large ribosomal subunit protein eL13 (202 aa).

The disordered stretch occupies residues 183–202 (GIREKRAKEKAEAEAEKAKK).

Belongs to the eukaryotic ribosomal protein eL13 family. Component of the large ribosomal subunit. Mature ribosomes consist of a small (40S) and a large (60S) subunit. The 40S subunit contains about 32 different proteins and 1 molecule of RNA (18S). The 60S subunit contains 45 different proteins and 3 molecules of RNA (25S, 5.8S and 5S).

The protein resides in the cytoplasm. Functionally, component of the ribosome, a large ribonucleoprotein complex responsible for the synthesis of proteins in the cell. The small ribosomal subunit (SSU) binds messenger RNAs (mRNAs) and translates the encoded message by selecting cognate aminoacyl-transfer RNA (tRNA) molecules. The large subunit (LSU) contains the ribosomal catalytic site termed the peptidyl transferase center (PTC), which catalyzes the formation of peptide bonds, thereby polymerizing the amino acids delivered by tRNAs into a polypeptide chain. The nascent polypeptides leave the ribosome through a tunnel in the LSU and interact with protein factors that function in enzymatic processing, targeting, and the membrane insertion of nascent chains at the exit of the ribosomal tunnel. This chain is Large ribosomal subunit protein eL13, found in Candida albicans (strain SC5314 / ATCC MYA-2876) (Yeast).